The primary structure comprises 312 residues: uncharacterized protein (312 aa).

This sequence belongs to the asfivirus CP312R family.

The protein localises to the virion. This is an uncharacterized protein from African swine fever virus (isolate Warthog/Namibia/Wart80/1980) (ASFV).